Reading from the N-terminus, the 403-residue chain is Tyrosine--tRNA ligase (403 aa).

The 'HIGH' region motif lies at 42–51 (PTAPDLHLGH). A 'KMSKS' region motif is present at residues 226–230 (KMSKS). ATP is bound at residue Lys-229. The 61-residue stretch at 336 to 396 (MPISAVLNKA…GKKAFGRVTL (61 aa)) folds into the S4 RNA-binding domain.

This sequence belongs to the class-I aminoacyl-tRNA synthetase family. TyrS type 2 subfamily. As to quaternary structure, homodimer.

It localises to the cytoplasm. It catalyses the reaction tRNA(Tyr) + L-tyrosine + ATP = L-tyrosyl-tRNA(Tyr) + AMP + diphosphate + H(+). Functionally, catalyzes the attachment of tyrosine to tRNA(Tyr) in a two-step reaction: tyrosine is first activated by ATP to form Tyr-AMP and then transferred to the acceptor end of tRNA(Tyr). This Pseudomonas syringae pv. syringae (strain B728a) protein is Tyrosine--tRNA ligase.